The primary structure comprises 299 residues: Release factor glutamine methyltransferase (299 aa).

Residues 134–138 (GTGSG), Asp-157, Trp-186, and Asn-203 each bind S-adenosyl-L-methionine. Residue 203 to 206 (NPPY) participates in substrate binding.

This sequence belongs to the protein N5-glutamine methyltransferase family. PrmC subfamily.

It carries out the reaction L-glutaminyl-[peptide chain release factor] + S-adenosyl-L-methionine = N(5)-methyl-L-glutaminyl-[peptide chain release factor] + S-adenosyl-L-homocysteine + H(+). Methylates the class 1 translation termination release factors RF1/PrfA and RF2/PrfB on the glutamine residue of the universally conserved GGQ motif. The polypeptide is Release factor glutamine methyltransferase (Synechocystis sp. (strain ATCC 27184 / PCC 6803 / Kazusa)).